A 448-amino-acid polypeptide reads, in one-letter code: Chromosomal replication initiator protein DnaA (448 aa).

The domain I, interacts with DnaA modulators stretch occupies residues Met1–Lys73. The domain II stretch occupies residues Lys73–Thr109. The segment at Met110–Ser326 is domain III, AAA+ region. Residues Gly154, Gly156, Lys157, and Thr158 each contribute to the ATP site. Positions Ser327–Lys448 are domain IV, binds dsDNA.

This sequence belongs to the DnaA family. As to quaternary structure, oligomerizes as a right-handed, spiral filament on DNA at oriC.

The protein resides in the cytoplasm. Plays an essential role in the initiation and regulation of chromosomal replication. ATP-DnaA binds to the origin of replication (oriC) to initiate formation of the DNA replication initiation complex once per cell cycle. Binds the DnaA box (a 9 base pair repeat at the origin) and separates the double-stranded (ds)DNA. Forms a right-handed helical filament on oriC DNA; dsDNA binds to the exterior of the filament while single-stranded (ss)DNA is stabiized in the filament's interior. The ATP-DnaA-oriC complex binds and stabilizes one strand of the AT-rich DNA unwinding element (DUE), permitting loading of DNA polymerase. After initiation quickly degrades to an ADP-DnaA complex that is not apt for DNA replication. Binds acidic phospholipids. In Clostridium botulinum (strain ATCC 19397 / Type A), this protein is Chromosomal replication initiator protein DnaA.